A 470-amino-acid polypeptide reads, in one-letter code: Ubiquitin carboxyl-terminal hydrolase calypso (470 aa).

A UCH catalytic domain is found at 43 to 274 (GWLELESDPG…IRFNLMAVVP (232 aa)). Cysteine 129 functions as the Nucleophile in the catalytic mechanism. Histidine 211 acts as the Proton donor in catalysis. The segment at 305–324 (DEQGEGGNGDPQRPDTPSTL) is disordered. Residues 373-401 (NYDKFICTFLSMLAHQGVLGELVSQHLLP) form the ULD domain. A positively charged C-terminal tail required for binding nucleosomes region spans residues 403-470 (KKISGQSAAN…KGRNKCKKRK (68 aa)). Over residues 422-451 (ANAGATAAGAAGAAPKSQQQQAAAAKNGKS) the composition is skewed to low complexity. A disordered region spans residues 422–470 (ANAGATAAGAAGAAPKSQQQQAAAAKNGKSPSKTPGRRRKGRNKCKKRK). Residues 456–470 (PGRRRKGRNKCKKRK) show a composition bias toward basic residues.

It belongs to the peptidase C12 family. BAP1 subfamily. Catalytic component of the polycomb repressive deubiquitinase (PR-DUB) complex, at least composed of caly/calypso, Asx and sba (MBD5/6 homolog). The PR-DUB complex associates with nucleosomes to mediate deubiquitination of histone H2AK118ub1 substrates; the association requires the positively charged C-terminal tail of caly, probably due to direct binding of DNA. Interacts (via ULD domain) with Asx (via DEUBAD domain); the interaction produces a stable heterodimer with a composite binding site for ubiquitin. Homodimerizes (via coiled-coil hinge-region between the UCH and ULD domains) to mediate assembly of 2 copies of the caly-Asx heterodimer into a bisymmetric tetramer; dimerization enhances PR-DUB association with nucleosomes.

It is found in the nucleus. It catalyses the reaction Thiol-dependent hydrolysis of ester, thioester, amide, peptide and isopeptide bonds formed by the C-terminal Gly of ubiquitin (a 76-residue protein attached to proteins as an intracellular targeting signal).. In terms of biological role, catalytic component of the polycomb repressive deubiquitinase (PR-DUB) complex, a complex that specifically mediates deubiquitination of histone H2A monoubiquitinated at 'Lys-119' (H2AK118ub1). Mediates bisymmetric organization of the PR-DUB complex and is involved in association with nucleosomes to mediate deubiquitination. Does not deubiquitinate monoubiquitinated histone H2B. Required to maintain the transcriptionally repressive state of homeotic genes throughout development. The PR-DUB complex has weak or no activity toward 'Lys-48'- and 'Lys-63'-linked polyubiquitin chains. Polycomb group (PcG) protein. The polypeptide is Ubiquitin carboxyl-terminal hydrolase calypso (Drosophila ananassae (Fruit fly)).